The sequence spans 245 residues: Probable phosphatase YcdX (245 aa).

Residues His-7, His-9, His-15, His-40, Glu-73, His-101, His-131, Asp-192, and His-194 each contribute to the Zn(2+) site.

The protein belongs to the PHP family. As to quaternary structure, homotrimer. It depends on Zn(2+) as a cofactor.

The polypeptide is Probable phosphatase YcdX (Shigella flexneri serotype 5b (strain 8401)).